We begin with the raw amino-acid sequence, 381 residues long: Protein-glutamate methylesterase/protein-glutamine glutaminase (381 aa).

Residues 8 to 125 enclose the Response regulatory domain; sequence QVLCIDDSAL…RDGMNEYADQ (118 aa). 4-aspartylphosphate is present on Asp-59. A CheB-type methylesterase domain is found at 183–375; that stretch reads FSSTEKLIIV…PHVLARLSAH (193 aa). Residues Ser-195, His-221, and Asp-317 contribute to the active site.

Belongs to the CheB family. Post-translationally, phosphorylated by CheA. Phosphorylation of the N-terminal regulatory domain activates the methylesterase activity.

Its subcellular location is the cytoplasm. The enzyme catalyses [protein]-L-glutamate 5-O-methyl ester + H2O = L-glutamyl-[protein] + methanol + H(+). It catalyses the reaction L-glutaminyl-[protein] + H2O = L-glutamyl-[protein] + NH4(+). Involved in chemotaxis. Part of a chemotaxis signal transduction system that modulates chemotaxis in response to various stimuli. Catalyzes the demethylation of specific methylglutamate residues introduced into the chemoreceptors (methyl-accepting chemotaxis proteins or MCP) by CheR. Also mediates the irreversible deamidation of specific glutamine residues to glutamic acid. This chain is Protein-glutamate methylesterase/protein-glutamine glutaminase, found in Ralstonia nicotianae (strain ATCC BAA-1114 / GMI1000) (Ralstonia solanacearum).